We begin with the raw amino-acid sequence, 145 residues long: Protein ImpA (145 aa).

Active-site for autocatalytic cleavage activity residues include Ser64 and Lys101.

Belongs to the peptidase S24 family.

Its function is as follows. Involved in UV protection and mutation. This chain is Protein ImpA, found in Escherichia coli.